Consider the following 401-residue polypeptide: uncharacterized protein (401 aa).

Belongs to the herpesviridae BTRF1 family.

This is an uncharacterized protein from Connochaetes taurinus (Blue wildebeest).